Consider the following 311-residue polypeptide: Phospholipid phosphatase 3 (311 aa).

Residues 1–33 (MQNYKYDKAIVAESKNGGSPALNNNPRKGGSKR) lie on the Cytoplasmic side of the membrane. At S19 the chain carries Phosphoserine. The chain crosses the membrane as a helical span at residues 34-54 (VLLICLDLFCLFMAGLPFIII). Over 55 to 85 (ETSTIKPYHRGFYCNDESIKYPQKTGETIND) the chain is Extracellular. Residues 86–106 (AVLTAVGIVIAILAIITGEFY) traverse the membrane as a helical segment. The Cytoplasmic portion of the chain corresponds to 107–123 (RIYYLKEKSRSTIQNPY). Residues 109-110 (YY) carry the Dityrosine basolateral targeting motif motif. A helical membrane pass occupies residues 124 to 144 (VAALYKQVGCFLFGCAISQSF). The Extracellular segment spans residues 145–194 (TDIAKVSIGRLRPHFLNVCNPDFSQINCSVGYIQNYRCRGEDSKVQEARK). Positions 149–157 (KVSIGRLRP) are phosphatase sequence motif I. N171 carries N-linked (GlcNAc...) asparagine glycosylation. Positions 183–185 (RGE) match the Integrin-binding motif motif. The chain crosses the membrane as a helical span at residues 195 to 215 (SFFSGHASFSMYTMLYLVLYL). Residues 197-200 (FSGH) are phosphatase sequence motif II. H200 (proton donors) is an active-site residue. Over 216 to 226 (QARFTWRGARL) the chain is Cytoplasmic. A helical transmembrane segment spans residues 227 to 244 (LRPLLQFTLIMMAFYTGL). A phosphatase sequence motif III region spans residues 245–256 (SRVSDHKHHPSD). At 245–258 (SRVSDHKHHPSDVL) the chain is on the extracellular side. H252 acts as the Nucleophile in catalysis. The chain crosses the membrane as a helical span at residues 259-279 (AGFAQGALVACCIVFFVSDLF). The mediates interaction with CTNND1 stretch occupies residues 276–311 (SDLFKTKTTLSLPPSAIRKDMLSPVDIDRSNHHNMV). Topologically, residues 280-311 (KTKTTLSLPPSAIRKDMLSPVDIDRSNHHNMV) are cytoplasmic.

It belongs to the PA-phosphatase related phosphoesterase family. As to quaternary structure, forms functional homodimers and homooligomers that are not required for substrate recognition and catalytic activity. Can also form heterooligomers with other PLPP2 and PLPP3. Interacts with CTNND1; negatively regulates the PLPP3-mediated stabilization of beta-catenin/CTNNB1. Post-translationally, N-glycosylated. Contains high-mannose oligosaccharides.

The protein localises to the cell membrane. It localises to the basolateral cell membrane. Its subcellular location is the endoplasmic reticulum membrane. The protein resides in the endoplasmic reticulum-Golgi intermediate compartment membrane. It is found in the golgi apparatus membrane. The protein localises to the golgi apparatus. It localises to the trans-Golgi network membrane. Its subcellular location is the membrane raft. The catalysed reaction is a 1,2-diacyl-sn-glycero-3-phosphate + H2O = a 1,2-diacyl-sn-glycerol + phosphate. It catalyses the reaction 1,2-dihexadecanoyl-sn-glycero-3-phosphate + H2O = 1,2-dihexadecanoyl-sn-glycerol + phosphate. The enzyme catalyses 1,2-di-(9Z-octadecenoyl)-sn-glycero-3-phosphate + H2O = 1,2-di-(9Z-octadecenoyl)-sn-glycerol + phosphate. It carries out the reaction a monoacyl-sn-glycero-3-phosphate + H2O = a monoacylglycerol + phosphate. The catalysed reaction is (9Z)-octadecenoyl-sn-glycero-3-phosphate + H2O = (9Z-octadecenoyl)-glycerol + phosphate. It catalyses the reaction sphing-4-enine 1-phosphate + H2O = sphing-4-enine + phosphate. The enzyme catalyses an N-acylsphing-4-enine 1-phosphate + H2O = an N-acylsphing-4-enine + phosphate. It carries out the reaction N-(octanoyl)-sphing-4-enine-1-phosphate + H2O = N-octanoylsphing-4-enine + phosphate. The catalysed reaction is N-(9Z-octadecenoyl)-ethanolamine phosphate + H2O = N-(9Z-octadecenoyl) ethanolamine + phosphate. Its pathway is lipid metabolism; phospholipid metabolism. Its activity is regulated as follows. Magnesium-independent phospholipid phosphatase. Insensitive to N-ethylmaleimide. Inhibited by sphingosine, zinc ions and modestly by propanolol. In terms of biological role, magnesium-independent phospholipid phosphatase of the plasma membrane that catalyzes the dephosphorylation of a variety of glycerolipid and sphingolipid phosphate esters including phosphatidate/PA, lysophosphatidate/LPA, diacylglycerol pyrophosphate/DGPP, sphingosine 1-phosphate/S1P and ceramide 1-phosphate/C1P. Also acts on N-oleoyl ethanolamine phosphate/N-(9Z-octadecenoyl)-ethanolamine phosphate, a potential physiological compound. Has both an extracellular and an intracellular phosphatase activity, allowing the hydrolysis and the cellular uptake of these bioactive lipid mediators from the milieu, regulating signal transduction in different cellular processes. Through the dephosphorylation of extracellular sphingosine-1-phosphate and the regulation of its extra- and intracellular availability, plays a role in vascular homeostasis, regulating endothelial cell migration, adhesion, survival, proliferation and the production of pro-inflammatory cytokines. By maintaining the appropriate levels of this lipid in the cerebellum, also ensure its proper development and function. Through its intracellular lipid phosphatase activity may act in early compartments of the secretory pathway, regulating the formation of Golgi to endoplasmic reticulum retrograde transport carriers. Its function is as follows. Independently of this phosphatase activity may also function in the Wnt signaling pathway and the stabilization of beta-catenin/CTNNB1, thereby regulating cell proliferation, migration and differentiation in angiogenesis or yet in tumor growth. Also plays a role in integrin-mediated cell-cell adhesion in angiogenesis. The protein is Phospholipid phosphatase 3 of Bos taurus (Bovine).